A 423-amino-acid chain; its full sequence is Glucose-1-phosphate adenylyltransferase (423 aa).

Alpha-D-glucose 1-phosphate contacts are provided by residues Tyr112, Gly177, 192–193 (EK), and Ser210.

This sequence belongs to the bacterial/plant glucose-1-phosphate adenylyltransferase family. As to quaternary structure, homotetramer.

It catalyses the reaction alpha-D-glucose 1-phosphate + ATP + H(+) = ADP-alpha-D-glucose + diphosphate. Its pathway is glycan biosynthesis; glycogen biosynthesis. Its function is as follows. Involved in the biosynthesis of ADP-glucose, a building block required for the elongation reactions to produce glycogen. Catalyzes the reaction between ATP and alpha-D-glucose 1-phosphate (G1P) to produce pyrophosphate and ADP-Glc. The protein is Glucose-1-phosphate adenylyltransferase of Rhodospirillum rubrum (strain ATCC 11170 / ATH 1.1.1 / DSM 467 / LMG 4362 / NCIMB 8255 / S1).